We begin with the raw amino-acid sequence, 82 residues long: Delta-actitoxin-Aeq2b 3 (82 aa).

An N-terminal signal peptide occupies residues 1–19; the sequence is MNRLMILVFAAVILALASA. Residues 20–26 constitute a propeptide that is removed on maturation; sequence DEDVDIT. 3 disulfide bridges follow: Cys32-Cys79, Cys34-Cys69, and Cys62-Cys80.

The protein belongs to the sea anemone sodium channel inhibitory toxin family. Type I subfamily.

The protein localises to the secreted. Its subcellular location is the nematocyst. Its function is as follows. Binds specifically to voltage-gated sodium channels (Nav), thereby delaying their inactivation during signal transduction. Causes death to crabs. The polypeptide is Delta-actitoxin-Aeq2b 3 (Actinia equina (Beadlet anemone)).